The primary structure comprises 281 residues: Splicing regulator RBM11 (281 aa).

In terms of domain architecture, RRM spans 10-87 (RTVFVGNLEA…RPINVQYRFG (78 aa)). Residues 184-281 (PSSYKWTHQQ…FRKSKKKKRY (98 aa)) form a disordered region. Composition is skewed to polar residues over residues 187-217 (YKWT…SSLN) and 229-242 (YKWT…SDLY). A Bipartite nuclear localization signal motif is present at residues 245-280 (NKRKRQKQTSDSDSSTDNNRGNECSQKFRKSKKKKR). The span at 271–281 (KFRKSKKKKRY) shows a compositional bias: basic residues.

As to quaternary structure, homodimer. Expressed in brain, hippocampus, prefrontal cortex, cerebellum, spinal cord, testis, mammary gland, spleen and kidney. Also expressed in fetal brain.

The protein resides in the nucleus. The protein localises to the nucleoplasm. It localises to the nucleus speckle. Its function is as follows. Tissue-specific splicing factor with potential implication in the regulation of alternative splicing during neuron and germ cell differentiation. Antagonizes SRSF1-mediated BCL-X splicing. May affect the choice of alternative 5' splice sites by binding to specific sequences in exons and antagonizing the SR protein SRSF1. The protein is Splicing regulator RBM11 of Homo sapiens (Human).